A 496-amino-acid chain; its full sequence is Acyltransferase clz6 (496 aa).

His-163 (proton acceptor) is an active-site residue.

Belongs to the plant acyltransferase family. In terms of assembly, monomer.

Its pathway is secondary metabolite biosynthesis. Functionally, acyltransferase; part of the gene cluster that mediates the biosynthesis of squalestatin S1 (SQS1, also known as zaragozic acid A), a heavily oxidized fungal polyketide that offers potent cholesterol lowering activity by targeting squalene synthase (SS). SQS1 is composed of a 2,8-dioxobicyclic[3.2.1]octane-3,4,5-tricarboxyclic acid core that is connected to two lipophilic polyketide arms. These initial steps feature the priming of an unusual benzoic acid starter unit onto the highly reducing polyketide synthase clz14, followed by oxaloacetate extension and product release to generate a tricarboxylic acid containing product. The phenylalanine ammonia lyase (PAL) clz10 and the acyl-CoA ligase clz12 are involved in transforming phenylalanine into benzoyl-CoA. The citrate synthase-like protein clz17 is involved in connecting the C-alpha-carbons of the hexaketide chain and oxaloacetate to afford the tricarboxylic acid unit. The potential hydrolytic enzymes, clz11 and clz13, are in close proximity to pks2 and may participate in product release. On the other side, the tetraketide arm is synthesized by a the squalestatin tetraketide synthase clz2 and enzymatically esterified to the core in the last biosynthetic step, by the acetyltransferase clz6. The biosynthesis of the tetraketide must involve 3 rounds of chain extension. After the first and second rounds methyl-transfer occurs, and in all rounds of extension the ketoreductase and dehydratase are active. The enoyl reductase and C-MeT of clz2 are not active in the final round of extension. The acetyltransferase clz6 appears to have a broad substrate selectivity for its acyl CoA substrate, allowing the in vitro synthesis of novel squalestatins. The biosynthesis of SQS1 requires several oxidative steps likely performed by oxidoreductases clz3, clz15 and clz16. Finally, in support of the identification of the cluster as being responsible for SQS1 production, the cluster contains a gene encoding a putative squalene synthase (SS) clz20, suggesting a likely mechanism for self-resistance. The protein is Acyltransferase clz6 of Cochliobolus lunatus (Filamentous fungus).